The following is a 355-amino-acid chain: uncharacterized protein (355 aa).

The helical transmembrane segment at 6–26 (LLTPYFLLSILSVGVFTATAA) threads the bilayer.

The protein belongs to the SUN family.

It localises to the membrane. This is an uncharacterized protein from Saccharomyces cerevisiae (strain ATCC 204508 / S288c) (Baker's yeast).